The chain runs to 114 residues: Snake venom vascular endothelial growth factor (114 aa).

The residue at position 1 (Q1) is a Pyrrolidone carboxylic acid. 3 cysteine pairs are disulfide-bonded: C14–C56, C45–C91, and C49–C93. A disordered region spans residues 92 to 114; the sequence is ECRPGSTVNNGKRKKNPKEGEPR.

It belongs to the PDGF/VEGF growth factor family. Snake venom VEGF subfamily. As to quaternary structure, homodimer; disulfide-linked. Interacts with human VEGF receptor 1/FLT1. Interacts with human VEGF receptor 2/KDR. In terms of tissue distribution, expressed by venom gland.

It localises to the secreted. Snake venom vascular endothelial growth factor (svVEGF) that may contribute to venom dispersion and prey subjugation by inducing vascular permeability and hypotension. Induces an increase in capillary permeability after intradermal injection, as well as a drastic hypotensive effect after intravenous injection. The hypotension is mediated by nitric oxide (NO), which is produced by VEGF-activated endothelium NO synthase. Induces angiogenesis and migration of human vascular endothelial cells in vitro. Exhibits angiogenic activity by inducing human umbilical vein endothelial cells (HUVEC) to develop vessels in vitro. Induces cellular migration of HUVEC cells towards a wound in scratch assays, enhancing wound closure after 12 h by 49.5%. Induces dose-dependent leukocyte recruitment to the peritoneal cavity leading to increased vascular permeability in mice. This is Snake venom vascular endothelial growth factor from Crotalus durissus terrificus (South American rattlesnake).